Reading from the N-terminus, the 252-residue chain is MNSRPAEKIDNNDGQTETPRSKTVSTINSTDALAMVEHSSELTLSITTPVGTKFVCRTPFIGTHTDKFLLVEMPKISADDLQYFFQEGFWMNIRAISPRGEGALIHFRSQLMHILQEPVPMAFLSIPNTMQVSQLRKEPRFELNLAGKVLFDEHRGDCELRDLSRSGCRFITPPLGKTYQVGDLVALEIFSDLRGTKTFPPLTGKICNLQRSLHHARYGLEFNEEGRNNAKNLLAQLKFNGTKLTLNAEKKA.

A compositionally biased stretch (basic and acidic residues) spans 1-11 (MNSRPAEKIDN). Residues 1–24 (MNSRPAEKIDNNDGQTETPRSKTV) form a disordered region. Over residues 12 to 24 (NDGQTETPRSKTV) the composition is skewed to polar residues. Residues 134-233 (QLRKEPRFEL…EEGRNNAKNL (100 aa)) form the PilZ domain.

The protein belongs to the YcgR family. Dimer.

It localises to the bacterial flagellum basal body. In terms of biological role, may act as a flagellar brake, regulating swimming and swarming in a bis-(3'-5') cyclic diguanylic acid (c-di-GMP)-dependent manner. Increasing levels of c-di-GMP lead to decreased motility (Potential). Binds bis-(3'-5') cyclic diguanylic acid (c-di-GMP) with a dissociation constant of 170 nM in the presence of 10 mM KCl and with 100 nM in its absence. Binds 1 to 2 c-di-GMP per subunit. Only 1 c-di-GMP is seen in the wild-type crystal, while 2 are seen in the mutant. Depending on the concentration of K(+) stoichiometries of 1:1, 1.43:1 and 2:1 are determined by isothermal titration calorimetry. This is Cyclic di-GMP binding protein VCA0042 from Vibrio cholerae serotype O1 (strain ATCC 39315 / El Tor Inaba N16961).